We begin with the raw amino-acid sequence, 235 residues long: Fms-related tyrosine kinase 3 ligand (235 aa).

The signal sequence occupies residues methionine 1–glycine 26. At threonine 27–proline 184 the chain is on the extracellular side. Cystine bridges form between cysteine 30–cysteine 111, cysteine 70–cysteine 153, and cysteine 119–cysteine 158. Residues asparagine 126 and asparagine 149 are each glycosylated (N-linked (GlcNAc...) asparagine). Residues proline 185–leucine 205 form a helical membrane-spanning segment. The Cytoplasmic portion of the chain corresponds to histidine 206–histidine 235. Positions arginine 213 to histidine 235 are disordered.

In terms of assembly, homodimer (isoform 2).

It localises to the cell membrane. The protein localises to the secreted. Stimulates the proliferation of early hematopoietic cells by activating FLT3. Synergizes well with a number of other colony stimulating factors and interleukins. Required for the development of B cells, and dendritic cells (DCs). This is Fms-related tyrosine kinase 3 ligand (FLT3LG) from Homo sapiens (Human).